The primary structure comprises 253 residues: Indole-3-glycerol phosphate synthase (253 aa).

This sequence belongs to the TrpC family.

The catalysed reaction is 1-(2-carboxyphenylamino)-1-deoxy-D-ribulose 5-phosphate + H(+) = (1S,2R)-1-C-(indol-3-yl)glycerol 3-phosphate + CO2 + H2O. Its pathway is amino-acid biosynthesis; L-tryptophan biosynthesis; L-tryptophan from chorismate: step 4/5. The polypeptide is Indole-3-glycerol phosphate synthase (Bacillus cereus (strain G9842)).